Consider the following 253-residue polypeptide: Glucosamine-6-phosphate deaminase (253 aa).

The Proton acceptor; for enolization step role is filled by Asp65. Asn133 acts as the For ring-opening step in catalysis. His135 functions as the Proton acceptor; for ring-opening step in the catalytic mechanism. The active-site For ring-opening step is Glu140.

It belongs to the glucosamine/galactosamine-6-phosphate isomerase family. NagB subfamily.

The enzyme catalyses alpha-D-glucosamine 6-phosphate + H2O = beta-D-fructose 6-phosphate + NH4(+). It participates in amino-sugar metabolism; N-acetylneuraminate degradation; D-fructose 6-phosphate from N-acetylneuraminate: step 5/5. In terms of biological role, catalyzes the reversible isomerization-deamination of glucosamine 6-phosphate (GlcN6P) to form fructose 6-phosphate (Fru6P) and ammonium ion. The protein is Glucosamine-6-phosphate deaminase of Corynebacterium glutamicum (strain ATCC 13032 / DSM 20300 / JCM 1318 / BCRC 11384 / CCUG 27702 / LMG 3730 / NBRC 12168 / NCIMB 10025 / NRRL B-2784 / 534).